The chain runs to 697 residues: MMRPVVVKEKRVNESQIHVVEDEVRQAKTMDRDIVTHAMKQSIAKLNPKVMIKNPIMFVVEIGFIITFILSFLPSSSSSIPGWFNITVSLILLFTVLFANFAEALAEGRGKAQADSLKQSKKDVFANVVKENGDIVQVSATDLRKGDVVIVKQGEMIPSDGEVIKGLASVDESAITGESAPVIKEAGGDFCSVTGGTMVVSDEITIVITSNPGESFIDKMISLVEGAARQKTPNEIALNTVLTSLTLIFLIVVVTLPIFTNYLGFQIDTAVLVALLVCLIPTTIGGLLSAIGIAGMDRVTKFNVLAMSGKAVEAAGDINTIILDKTGTITFGNRMAHTLLPVGNETIEQVGKWAAISSVLDETPEGRSVIEYVQAKSISYNRELAEQGEFVPFKAETRMSGVDLRDGTKVRKGAVSSVIEWVQSQGGTIPKDVNQKADFISKEGGTPLVVAVNDHIYGLIYLKDTVKPGMRERFEQLRQMGIKTVMCTGDNPLTAATIAKEAGVDEFVAECKPEDKIAVIKAEQDKGKLVAMTGDGTNDAPALAQADVGLAMNSGTTAAKEAANMIDLDSNPTKIIEVVGIGKQLLMTRGALTTFSIANDVAKYFAIIPAMFTLAIPQMEALNIMKLTSPLSAILSALLFNAVIIPLLIPLAMKGIAYKPMSSNALLGRNLLIYGLGGVIVPFIGIKVIDIIVGLFI.

Helical transmembrane passes span 55–75, 79–99, 245–265, and 271–291; these read PIMF…FLPS, SIPG…VLFA, LTLI…YLGF, and VLVA…LSAI. The active-site 4-aspartylphosphate intermediate is Asp-324. Residues Asp-361, Glu-365, 393-400, and Lys-412 contribute to the ATP site; that span reads FKAETRMS. 2 residues coordinate Mg(2+): Asp-535 and Asp-539. A run of 3 helical transmembrane segments spans residues 605-625, 633-653, and 677-697; these read FAII…LNIM, AILS…PLAM, and GGVI…GLFI.

Belongs to the cation transport ATPase (P-type) (TC 3.A.3) family. Type IA subfamily. As to quaternary structure, the system is composed of three essential subunits: KdpA, KdpB and KdpC.

The protein resides in the cell membrane. It catalyses the reaction K(+)(out) + ATP + H2O = K(+)(in) + ADP + phosphate + H(+). Its function is as follows. Part of the high-affinity ATP-driven potassium transport (or Kdp) system, which catalyzes the hydrolysis of ATP coupled with the electrogenic transport of potassium into the cytoplasm. This subunit is responsible for energy coupling to the transport system and for the release of the potassium ions to the cytoplasm. This Bacillus cereus (strain ZK / E33L) protein is Potassium-transporting ATPase ATP-binding subunit.